We begin with the raw amino-acid sequence, 257 residues long: Methylthioribulose-1-phosphate dehydratase (257 aa).

Position 107 (Cys107) interacts with substrate. Positions 125 and 127 each coordinate Zn(2+). Glu148 functions as the Proton donor/acceptor in the catalytic mechanism. His210 serves as a coordination point for Zn(2+).

The protein belongs to the aldolase class II family. MtnB subfamily. Zn(2+) is required as a cofactor.

The protein localises to the cytoplasm. The catalysed reaction is 5-(methylsulfanyl)-D-ribulose 1-phosphate = 5-methylsulfanyl-2,3-dioxopentyl phosphate + H2O. Its pathway is amino-acid biosynthesis; L-methionine biosynthesis via salvage pathway; L-methionine from S-methyl-5-thio-alpha-D-ribose 1-phosphate: step 2/6. Catalyzes the dehydration of methylthioribulose-1-phosphate (MTRu-1-P) into 2,3-diketo-5-methylthiopentyl-1-phosphate (DK-MTP-1-P). This chain is Methylthioribulose-1-phosphate dehydratase, found in Lachancea thermotolerans (strain ATCC 56472 / CBS 6340 / NRRL Y-8284) (Yeast).